Here is a 347-residue protein sequence, read N- to C-terminus: NADH-ubiquinone oxidoreductase chain 2 (347 aa).

Helical transmembrane passes span 3–23 (PPIL…VLTS), 25–45 (HWLL…PILM), 60–80 (FLTQ…NLMF), 96–116 (GLVT…FWVP), 122–142 (ISLS…LSIL), 153–173 (LLIT…LNQT), 178–198 (ILAY…TYNP), 200–220 (LMIL…MLFM), 237–257 (LPLM…LPPL), 274–294 (DMII…YFYM), and 323–343 (IILL…TPMM).

Belongs to the complex I subunit 2 family. Core subunit of respiratory chain NADH dehydrogenase (Complex I) which is composed of 45 different subunits. Interacts with TMEM242.

It is found in the mitochondrion inner membrane. It carries out the reaction a ubiquinone + NADH + 5 H(+)(in) = a ubiquinol + NAD(+) + 4 H(+)(out). Its function is as follows. Core subunit of the mitochondrial membrane respiratory chain NADH dehydrogenase (Complex I) which catalyzes electron transfer from NADH through the respiratory chain, using ubiquinone as an electron acceptor. Essential for the catalytic activity and assembly of complex I. This Halichoerus grypus (Gray seal) protein is NADH-ubiquinone oxidoreductase chain 2.